The following is a 213-amino-acid chain: Adenylate kinase (213 aa).

Residue 10 to 15 (GCGKGT) coordinates ATP. The NMP stretch occupies residues 30–59 (STGDLMRKEISLNTTLGLKCQEYMNAGKYV). AMP contacts are provided by residues threonine 31, arginine 36, 57–59 (KYV), 83–86 (GYPR), and glutamine 90. Residues 124 to 161 (NRLVCPLCKASFNLETRKPKQEGLCDFDNTKLVKRSDD) are LID. ATP is bound at residue arginine 125. Residues cysteine 128 and cysteine 131 each contribute to the Zn(2+) site. ATP is bound at residue 134-135 (SF). Cysteine 148 and aspartate 151 together coordinate Zn(2+). Residues arginine 158 and arginine 169 each contribute to the AMP site. Asparagine 197 serves as a coordination point for ATP.

The protein belongs to the adenylate kinase family. As to quaternary structure, monomer.

Its subcellular location is the cytoplasm. It catalyses the reaction AMP + ATP = 2 ADP. It participates in purine metabolism; AMP biosynthesis via salvage pathway; AMP from ADP: step 1/1. Functionally, catalyzes the reversible transfer of the terminal phosphate group between ATP and AMP. Plays an important role in cellular energy homeostasis and in adenine nucleotide metabolism. The chain is Adenylate kinase from Mycoplasma capricolum subsp. capricolum (strain California kid / ATCC 27343 / NCTC 10154).